The sequence spans 409 residues: UPF0261 protein Spro_4740 (409 aa).

Belongs to the UPF0261 family.

In Serratia proteamaculans (strain 568), this protein is UPF0261 protein Spro_4740.